The primary structure comprises 156 residues: Ribosome maturation factor RimP (156 aa).

Belongs to the RimP family.

Its subcellular location is the cytoplasm. In terms of biological role, required for maturation of 30S ribosomal subunits. The polypeptide is Ribosome maturation factor RimP (Oceanobacillus iheyensis (strain DSM 14371 / CIP 107618 / JCM 11309 / KCTC 3954 / HTE831)).